The sequence spans 157 residues: MEKVPMTARGEKLLREELDRLLKLRPKITEAIAEARELGDLKENAEYHAAREEQGICEAQIRDIEYKLSVAQVIDVTKMENSGKVIFGATVTVIDVNSDEEKTYQIVGDDEADIKSGRISVNSPIARGLIGKFEGDEVSIATPGGNKVFEIDRVEYL.

Residues 14 to 37 (LREELDRLLKLRPKITEAIAEARE) adopt a coiled-coil conformation.

This sequence belongs to the GreA/GreB family.

Necessary for efficient RNA polymerase transcription elongation past template-encoded arresting sites. The arresting sites in DNA have the property of trapping a certain fraction of elongating RNA polymerases that pass through, resulting in locked ternary complexes. Cleavage of the nascent transcript by cleavage factors such as GreA or GreB allows the resumption of elongation from the new 3'terminus. GreA releases sequences of 2 to 3 nucleotides. This is Transcription elongation factor GreA from Vibrio cholerae serotype O1 (strain ATCC 39315 / El Tor Inaba N16961).